A 356-amino-acid polypeptide reads, in one-letter code: DNA polymerase IV (356 aa).

The 182-residue stretch at 7 to 188 (IIHIDMDAFY…IPVTKFYGVG (182 aa)) folds into the UmuC domain. Asp11 and Asp106 together coordinate Mg(2+). The active site involves Glu107.

The protein belongs to the DNA polymerase type-Y family. As to quaternary structure, monomer. The cofactor is Mg(2+).

The protein resides in the cytoplasm. It catalyses the reaction DNA(n) + a 2'-deoxyribonucleoside 5'-triphosphate = DNA(n+1) + diphosphate. Poorly processive, error-prone DNA polymerase involved in untargeted mutagenesis. Copies undamaged DNA at stalled replication forks, which arise in vivo from mismatched or misaligned primer ends. These misaligned primers can be extended by PolIV. Exhibits no 3'-5' exonuclease (proofreading) activity. May be involved in translesional synthesis, in conjunction with the beta clamp from PolIII. This Listeria welshimeri serovar 6b (strain ATCC 35897 / DSM 20650 / CCUG 15529 / CIP 8149 / NCTC 11857 / SLCC 5334 / V8) protein is DNA polymerase IV.